Consider the following 484-residue polypeptide: tRNA sulfurtransferase (484 aa).

One can recognise a THUMP domain in the interval 63–167; that stretch reads QAFGERLACI…RDKLYMVTKR (105 aa). ATP contacts are provided by residues 185-186, Lys267, Gly289, and Gln298; that span reads LI. An intrachain disulfide couples Cys346 to Cys458. Residues 406–484 enclose the Rhodanese domain; the sequence is IETNEVVIDI…GYTNVKVYRP (79 aa). The active-site Cysteine persulfide intermediate is Cys458.

Belongs to the ThiI family.

The protein resides in the cytoplasm. It carries out the reaction [ThiI sulfur-carrier protein]-S-sulfanyl-L-cysteine + a uridine in tRNA + 2 reduced [2Fe-2S]-[ferredoxin] + ATP + H(+) = [ThiI sulfur-carrier protein]-L-cysteine + a 4-thiouridine in tRNA + 2 oxidized [2Fe-2S]-[ferredoxin] + AMP + diphosphate. It catalyses the reaction [ThiS sulfur-carrier protein]-C-terminal Gly-Gly-AMP + S-sulfanyl-L-cysteinyl-[cysteine desulfurase] + AH2 = [ThiS sulfur-carrier protein]-C-terminal-Gly-aminoethanethioate + L-cysteinyl-[cysteine desulfurase] + A + AMP + 2 H(+). It participates in cofactor biosynthesis; thiamine diphosphate biosynthesis. In terms of biological role, catalyzes the ATP-dependent transfer of a sulfur to tRNA to produce 4-thiouridine in position 8 of tRNAs, which functions as a near-UV photosensor. Also catalyzes the transfer of sulfur to the sulfur carrier protein ThiS, forming ThiS-thiocarboxylate. This is a step in the synthesis of thiazole, in the thiamine biosynthesis pathway. The sulfur is donated as persulfide by IscS. The sequence is that of tRNA sulfurtransferase from Shewanella putrefaciens (strain CN-32 / ATCC BAA-453).